Here is a 160-residue protein sequence, read N- to C-terminus: 2-C-methyl-D-erythritol 2,4-cyclodiphosphate synthase (160 aa).

A divalent metal cation contacts are provided by D11 and H13. Residues 11 to 13 (DVH) and 37 to 38 (HS) contribute to the 4-CDP-2-C-methyl-D-erythritol 2-phosphate site. A divalent metal cation is bound at residue H45. Residues 59–61 (DIG) and R145 each bind 4-CDP-2-C-methyl-D-erythritol 2-phosphate.

Belongs to the IspF family. Homotrimer. A divalent metal cation is required as a cofactor.

The catalysed reaction is 4-CDP-2-C-methyl-D-erythritol 2-phosphate = 2-C-methyl-D-erythritol 2,4-cyclic diphosphate + CMP. It participates in isoprenoid biosynthesis; isopentenyl diphosphate biosynthesis via DXP pathway; isopentenyl diphosphate from 1-deoxy-D-xylulose 5-phosphate: step 4/6. Its function is as follows. Involved in the biosynthesis of isopentenyl diphosphate (IPP) and dimethylallyl diphosphate (DMAPP), two major building blocks of isoprenoid compounds. Catalyzes the conversion of 4-diphosphocytidyl-2-C-methyl-D-erythritol 2-phosphate (CDP-ME2P) to 2-C-methyl-D-erythritol 2,4-cyclodiphosphate (ME-CPP) with a corresponding release of cytidine 5-monophosphate (CMP). The chain is 2-C-methyl-D-erythritol 2,4-cyclodiphosphate synthase from Neisseria meningitidis serogroup A / serotype 4A (strain DSM 15465 / Z2491).